Consider the following 1296-residue polypeptide: Protein ORF75 (1296 aa).

It is found in the virion tegument. This is Protein ORF75 (ORF75) from Homo sapiens (Human).